Consider the following 393-residue polypeptide: Phospho-N-acetylmuramoyl-pentapeptide-transferase (393 aa).

Helical transmembrane passes span 29-49 (RAVM…PIVI), 75-95 (TPTM…LLWF), 101-121 (FVWI…VDDW), 138-158 (YFWQ…SVSE), 193-213 (SISY…VIVG), 226-246 (GLAI…AYAT), 263-283 (AGEL…FLWF), 290-310 (VFMG…IAVI), 315-335 (VVLA…MAQV), and 370-390 (QVVV…LSSL).

It belongs to the glycosyltransferase 4 family. MraY subfamily. Requires Mg(2+) as cofactor.

It localises to the cell inner membrane. The catalysed reaction is UDP-N-acetyl-alpha-D-muramoyl-L-alanyl-gamma-D-glutamyl-meso-2,6-diaminopimeloyl-D-alanyl-D-alanine + di-trans,octa-cis-undecaprenyl phosphate = di-trans,octa-cis-undecaprenyl diphospho-N-acetyl-alpha-D-muramoyl-L-alanyl-D-glutamyl-meso-2,6-diaminopimeloyl-D-alanyl-D-alanine + UMP. The protein operates within cell wall biogenesis; peptidoglycan biosynthesis. Its function is as follows. Catalyzes the initial step of the lipid cycle reactions in the biosynthesis of the cell wall peptidoglycan: transfers peptidoglycan precursor phospho-MurNAc-pentapeptide from UDP-MurNAc-pentapeptide onto the lipid carrier undecaprenyl phosphate, yielding undecaprenyl-pyrophosphoryl-MurNAc-pentapeptide, known as lipid I. This Methylibium petroleiphilum (strain ATCC BAA-1232 / LMG 22953 / PM1) protein is Phospho-N-acetylmuramoyl-pentapeptide-transferase.